The sequence spans 476 residues: Protein DETOXIFICATION 3 (476 aa).

12 helical membrane-spanning segments follow: residues 35–55, 66–86, 117–137, 146–166, 185–205, 208–228, 260–280, 289–309, 331–351, 370–390, 402–422, and 433–453; these read AAPMAAVTIAQYLLPVISVMV, GVALATSFTNVSGFSILFGLA, IPICVLISVLWIYIEKLLISL, VAGSYALWLIPALFAHAFFIP, LTTLLFHIPVCWAFVYAFGLG, GAAMAISVSFWFYVVILSCYV, AAMVCLEWWLFELLILCSGLL, VLSICLTTASLHYVIPGGVAA, VLAGLCLWLVESAFFSTLLFT, VANLTPLLCLSFILDGFTAVL, IGALNNVVAYYLVGAPVGVYL, and LWCGVVVGSAVQAIILAFVTA.

Belongs to the multi antimicrobial extrusion (MATE) (TC 2.A.66.1) family.

Its subcellular location is the membrane. The protein is Protein DETOXIFICATION 3 of Arabidopsis thaliana (Mouse-ear cress).